The primary structure comprises 744 residues: MLSRLGALLQEAVGAREPSIDLLQAFVEHWKGITHYYIESTDENTPAKKTDIPWRLKQMLDILVYEEKQQASSGEAGPCLEYLLQHKILETLCTLGKAEYPPGMRQQVFQFFSKVLSQVQHPLLHYLSVHRPVQKLLRLGGTVPGSLTEKEEVQFTSVLCSKIQQDPELLAYILEGKKIIGKKKTARESTAPPKDIAGYRDKDCPHSDALNRDPGLDKEHCGVPALSIHLPAETEGPENGPGESNLITSLLGLCKSKKSRLALKAQENILLLVSVASPAAATYLTQSTSCCMAIAEHLCQLYRSMPACLDPADIATLEGISWRLPSAPSDETAFPGKEALAAFLGWFDYCDHLITEAHTVVADALAKAVAEKLFVETLQPQLLHVSEQSILTSTALLTALLRQLRSPALLQEAMTFLLGTDQHPAAIEDSPHTLGTHLIMHCDHLSDEISIATLRLFEELLQKPHEQAIRSLVLQNLEGRLYVARGSPEPESYEDTLDLEEDPYFTDGFLDSGLQPSTKPPPAPATSSDGKTAVTEIVNSFLCLVPEEAKTSAFLEENGYDTYVHDAYGLFQECSSRVAHWGWPLGPAPLDSHEPERPFFEGRFLQVLFDRIARILDQPYSLNLQVTSVLSRLALFPHPHIHEYLLDPYISLAPGCRSLFSVLVRVIGDLMQRIQRVPQFSGKLLLVRKQLMGQVPGEHLDHQTLLQGVVVLEEFCKELAAIAFVKFPPHGPYLNFSPPPEGQV.

Disordered regions lie at residues 184–213 and 510–530; these read KTAR…LNRD and LDSG…SSDG. Positions 197-213 are enriched in basic and acidic residues; it reads AGYRDKDCPHSDALNRD.

Belongs to the FHIP family. Expressed in colon.

Able to activate MAPK/ERK and TGFB signaling pathways. May regulate the activity of genes involved in intestinal barrier function and immunoprotective inflammation. May play a role in cell proliferation. The chain is FHF complex subunit HOOK-interacting protein 2B from Mus musculus (Mouse).